We begin with the raw amino-acid sequence, 364 residues long: Fructose-1,6-bisphosphatase class 1 1 (364 aa).

Mg(2+) contacts are provided by Glu-99, Asp-121, Leu-123, and Asp-124. Residues 124 to 127 and Asn-220 contribute to the substrate site; that span reads DGSS. Position 292 (Glu-292) interacts with Mg(2+).

It belongs to the FBPase class 1 family. In terms of assembly, homotetramer. Requires Mg(2+) as cofactor.

The protein resides in the cytoplasm. The enzyme catalyses beta-D-fructose 1,6-bisphosphate + H2O = beta-D-fructose 6-phosphate + phosphate. Its pathway is carbohydrate biosynthesis; gluconeogenesis. The protein is Fructose-1,6-bisphosphatase class 1 1 of Albidiferax ferrireducens (strain ATCC BAA-621 / DSM 15236 / T118) (Rhodoferax ferrireducens).